The primary structure comprises 152 residues: UPF0266 membrane protein YobD (152 aa).

The next 3 helical transmembrane spans lie at L6–M26, V45–H65, and A67–I87.

Belongs to the UPF0266 family.

Its subcellular location is the cell inner membrane. The chain is UPF0266 membrane protein YobD from Salmonella paratyphi A (strain ATCC 9150 / SARB42).